We begin with the raw amino-acid sequence, 304 residues long: HPr kinase/phosphorylase (304 aa).

Catalysis depends on residues H136 and K157. 151–158 lines the ATP pocket; that stretch reads GESGIGKS. Mg(2+) is bound at residue S158. Residue D175 is the Proton acceptor; for phosphorylation activity. Proton donor; for dephosphorylation activity of the active site. Residues 198 to 207 are important for the catalytic mechanism of both phosphorylation and dephosphorylation; sequence LEVRGIGIID. E199 is a Mg(2+) binding site. Residue R240 is part of the active site. Residues 261–266 are important for the catalytic mechanism of dephosphorylation; sequence PVRPGR.

This sequence belongs to the HPrK/P family. Homohexamer. The cofactor is Mg(2+).

It catalyses the reaction [HPr protein]-L-serine + ATP = [HPr protein]-O-phospho-L-serine + ADP + H(+). The catalysed reaction is [HPr protein]-O-phospho-L-serine + phosphate + H(+) = [HPr protein]-L-serine + diphosphate. Catalyzes the ATP- as well as the pyrophosphate-dependent phosphorylation of a specific serine residue in HPr, a phosphocarrier protein of the phosphoenolpyruvate-dependent sugar phosphotransferase system (PTS). HprK/P also catalyzes the pyrophosphate-producing, inorganic phosphate-dependent dephosphorylation (phosphorolysis) of seryl-phosphorylated HPr (P-Ser-HPr). The two antagonistic activities of HprK/P are regulated by several intracellular metabolites, which change their concentration in response to the absence or presence of rapidly metabolisable carbon sources (glucose, fructose, etc.) in the growth medium. Therefore, by controlling the phosphorylation state of HPr, HPrK/P is a sensor enzyme that plays a major role in the regulation of carbon metabolism and sugar transport: it mediates carbon catabolite repression (CCR), and regulates PTS-catalyzed carbohydrate uptake and inducer exclusion. In Clostridium botulinum (strain Eklund 17B / Type B), this protein is HPr kinase/phosphorylase.